Consider the following 373-residue polypeptide: Chaperone protein DnaJ (373 aa).

The region spanning 4-68 (NYYQILGVSK…QTRAAYDRLG (65 aa)) is the J domain. A CR-type zinc finger spans residues 136–214 (GIEKNISFSS…CHGMGRYHKQ (79 aa)). Zn(2+) is bound by residues C149, C152, C166, C169, C188, C191, C202, and C205. 4 CXXCXGXG motif repeats span residues 149 to 156 (CDTCHGSG), 166 to 173 (CDACSGVG), 188 to 195 (CHKCQGNG), and 202 to 209 (CKKCHGMG).

This sequence belongs to the DnaJ family. Homodimer. Requires Zn(2+) as cofactor.

It is found in the cytoplasm. Functionally, participates actively in the response to hyperosmotic and heat shock by preventing the aggregation of stress-denatured proteins and by disaggregating proteins, also in an autonomous, DnaK-independent fashion. Unfolded proteins bind initially to DnaJ; upon interaction with the DnaJ-bound protein, DnaK hydrolyzes its bound ATP, resulting in the formation of a stable complex. GrpE releases ADP from DnaK; ATP binding to DnaK triggers the release of the substrate protein, thus completing the reaction cycle. Several rounds of ATP-dependent interactions between DnaJ, DnaK and GrpE are required for fully efficient folding. Also involved, together with DnaK and GrpE, in the DNA replication of plasmids through activation of initiation proteins. This Rickettsia peacockii (strain Rustic) protein is Chaperone protein DnaJ.